Here is a 336-residue protein sequence, read N- to C-terminus: tRNA N6-adenosine threonylcarbamoyltransferase (336 aa).

The Fe cation site is built by histidine 114 and histidine 118. Substrate-binding positions include 136–140 (LVSGG), aspartate 169, glycine 182, aspartate 186, and asparagine 275. Position 302 (aspartate 302) interacts with Fe cation.

It belongs to the KAE1 / TsaD family. Fe(2+) is required as a cofactor.

The protein resides in the cytoplasm. The enzyme catalyses L-threonylcarbamoyladenylate + adenosine(37) in tRNA = N(6)-L-threonylcarbamoyladenosine(37) in tRNA + AMP + H(+). Its function is as follows. Required for the formation of a threonylcarbamoyl group on adenosine at position 37 (t(6)A37) in tRNAs that read codons beginning with adenine. Is involved in the transfer of the threonylcarbamoyl moiety of threonylcarbamoyl-AMP (TC-AMP) to the N6 group of A37, together with TsaE and TsaB. TsaD likely plays a direct catalytic role in this reaction. The chain is tRNA N6-adenosine threonylcarbamoyltransferase from Streptococcus agalactiae serotype Ia (strain ATCC 27591 / A909 / CDC SS700).